The primary structure comprises 335 residues: Tetraacyldisaccharide 4'-kinase (335 aa).

ATP is bound at residue 58–65; that stretch reads TAGGSGKT.

Belongs to the LpxK family.

The catalysed reaction is a lipid A disaccharide + ATP = a lipid IVA + ADP + H(+). Its pathway is glycolipid biosynthesis; lipid IV(A) biosynthesis; lipid IV(A) from (3R)-3-hydroxytetradecanoyl-[acyl-carrier-protein] and UDP-N-acetyl-alpha-D-glucosamine: step 6/6. Its function is as follows. Transfers the gamma-phosphate of ATP to the 4'-position of a tetraacyldisaccharide 1-phosphate intermediate (termed DS-1-P) to form tetraacyldisaccharide 1,4'-bis-phosphate (lipid IVA). This chain is Tetraacyldisaccharide 4'-kinase, found in Shewanella frigidimarina (strain NCIMB 400).